A 130-amino-acid polypeptide reads, in one-letter code: Small ribosomal subunit protein uS9 (130 aa).

The segment at 105–130 (TRDSRMKERKKPGLKGARRAPQFSKR) is disordered. The segment covering 111 to 130 (KERKKPGLKGARRAPQFSKR) has biased composition (basic residues).

Belongs to the universal ribosomal protein uS9 family.

The sequence is that of Small ribosomal subunit protein uS9 from Listeria welshimeri serovar 6b (strain ATCC 35897 / DSM 20650 / CCUG 15529 / CIP 8149 / NCTC 11857 / SLCC 5334 / V8).